The following is a 197-amino-acid chain: Crossover junction endodeoxyribonuclease RuvC (197 aa).

Active-site residues include aspartate 7, glutamate 68, and aspartate 141. Aspartate 7, glutamate 68, and aspartate 141 together coordinate Mg(2+). 2 stretches are compositionally biased toward low complexity: residues 165–181 (AAPA…TPAR) and 188–197 (APARRPAGAS). A disordered region spans residues 165-197 (AAPAAPVSRPAPATPARRSPRPAAPARRPAGAS).

It belongs to the RuvC family. Homodimer which binds Holliday junction (HJ) DNA. The HJ becomes 2-fold symmetrical on binding to RuvC with unstacked arms; it has a different conformation from HJ DNA in complex with RuvA. In the full resolvosome a probable DNA-RuvA(4)-RuvB(12)-RuvC(2) complex forms which resolves the HJ. Requires Mg(2+) as cofactor.

It is found in the cytoplasm. It carries out the reaction Endonucleolytic cleavage at a junction such as a reciprocal single-stranded crossover between two homologous DNA duplexes (Holliday junction).. Its function is as follows. The RuvA-RuvB-RuvC complex processes Holliday junction (HJ) DNA during genetic recombination and DNA repair. Endonuclease that resolves HJ intermediates. Cleaves cruciform DNA by making single-stranded nicks across the HJ at symmetrical positions within the homologous arms, yielding a 5'-phosphate and a 3'-hydroxyl group; requires a central core of homology in the junction. The consensus cleavage sequence is 5'-(A/T)TT(C/G)-3'. Cleavage occurs on the 3'-side of the TT dinucleotide at the point of strand exchange. HJ branch migration catalyzed by RuvA-RuvB allows RuvC to scan DNA until it finds its consensus sequence, where it cleaves and resolves the cruciform DNA. In Frankia alni (strain DSM 45986 / CECT 9034 / ACN14a), this protein is Crossover junction endodeoxyribonuclease RuvC.